Consider the following 439-residue polypeptide: Acyl transferase 7 (439 aa).

Residues 1-25 (MAAAAPDKAVERLSQKLVHPSSPTP) are disordered. Active-site proton acceptor residues include His-176 and Asp-383.

It belongs to the plant acyltransferase family.

Its function is as follows. Involved in the incorporation of ferulate into the cell wall. May act as arabinoxylan feruloyl transferase. This is Acyl transferase 7 from Oryza sativa subsp. japonica (Rice).